Consider the following 253-residue polypeptide: MSESPYTSGTTHFGFRDVAAKDKQKLVGEVFTSVARNYDLMNDLMSLGVHRAWKRYFVTTAQVKPGDRVLDLAGGTGDIAVLLKERVGNEGAVVLGDINAGMLSVGRDRLTNRGLVSGFDYVQCNAEALPFPDQSFDLVTISFGLRNVTDKDAALREMYRVLKVGGQARVLEFSEVTAEWFKPIYDFHSFKILPKLGKLFARDADSYQYLAESIRKHPPQESLKGMMGEAGFARCHFKNLTGGIVAIHSGYKI.

Residues Thr76, Asp97, 125–126, and Ser142 contribute to the S-adenosyl-L-methionine site; that span reads NA.

This sequence belongs to the class I-like SAM-binding methyltransferase superfamily. MenG/UbiE family.

The enzyme catalyses a 2-demethylmenaquinol + S-adenosyl-L-methionine = a menaquinol + S-adenosyl-L-homocysteine + H(+). The catalysed reaction is a 2-methoxy-6-(all-trans-polyprenyl)benzene-1,4-diol + S-adenosyl-L-methionine = a 5-methoxy-2-methyl-3-(all-trans-polyprenyl)benzene-1,4-diol + S-adenosyl-L-homocysteine + H(+). The protein operates within quinol/quinone metabolism; menaquinone biosynthesis; menaquinol from 1,4-dihydroxy-2-naphthoate: step 2/2. It functions in the pathway cofactor biosynthesis; ubiquinone biosynthesis. Its function is as follows. Methyltransferase required for the conversion of demethylmenaquinol (DMKH2) to menaquinol (MKH2) and the conversion of 2-polyprenyl-6-methoxy-1,4-benzoquinol (DDMQH2) to 2-polyprenyl-3-methyl-6-methoxy-1,4-benzoquinol (DMQH2). The chain is Ubiquinone/menaquinone biosynthesis C-methyltransferase UbiE from Xanthomonas oryzae pv. oryzae (strain MAFF 311018).